A 719-amino-acid chain; its full sequence is Ribosomal RNA large subunit methyltransferase K/L (719 aa).

The 112-residue stretch at 43 to 154 (IGYKACLWSR…KGKANITLDL (112 aa)) folds into the THUMP domain.

The protein belongs to the methyltransferase superfamily. RlmKL family.

The protein resides in the cytoplasm. The catalysed reaction is guanosine(2445) in 23S rRNA + S-adenosyl-L-methionine = N(2)-methylguanosine(2445) in 23S rRNA + S-adenosyl-L-homocysteine + H(+). The enzyme catalyses guanosine(2069) in 23S rRNA + S-adenosyl-L-methionine = N(2)-methylguanosine(2069) in 23S rRNA + S-adenosyl-L-homocysteine + H(+). Its function is as follows. Specifically methylates the guanine in position 2445 (m2G2445) and the guanine in position 2069 (m7G2069) of 23S rRNA. The chain is Ribosomal RNA large subunit methyltransferase K/L from Aeromonas salmonicida (strain A449).